A 580-amino-acid polypeptide reads, in one-letter code: Mitogen-activated protein kinase 12 (580 aa).

Residues 18–38 (RTASGSNQSSNAGEEAASSDL) form a disordered region. Residues 20–29 (ASGSNQSSNA) show a composition bias toward polar residues. One can recognise a Protein kinase domain in the interval 87–378 (YQIQEVIGKG…AEEALADPYF (292 aa)). Residues 93–101 (IGKGSYGVV) and lysine 116 each bind ATP. Catalysis depends on aspartate 213, which acts as the Proton acceptor. Threonine 249 carries the phosphothreonine modification. The TXY motif lies at 249–251 (TDY). At tyrosine 251 the chain carries Phosphotyrosine. The interval 325-506 (ARRYLSTMRK…SADSVARTTV (182 aa)) is required for kinase activity and nuclear localization. The interval 458 to 580 (YSKGERGSPL…LSEQVSRMHS (123 aa)) is disordered. Positions 502-543 (ARTTVSPPMSQDAQQHGSAGQNGVTSTDLSSRSYLKSASISA) are enriched in polar residues. Over residues 554–566 (EPEDDYISEEMEG) the composition is skewed to acidic residues.

The protein belongs to the protein kinase superfamily. CMGC Ser/Thr protein kinase family. MAP kinase subfamily. Interacts with EREBP1. In terms of processing, dually phosphorylated on Thr-249 and Tyr-251, which activates the enzyme. Phosphorylated on tyrosine residue.

The protein localises to the cytoplasm. Its subcellular location is the nucleus. The catalysed reaction is L-seryl-[protein] + ATP = O-phospho-L-seryl-[protein] + ADP + H(+). It carries out the reaction L-threonyl-[protein] + ATP = O-phospho-L-threonyl-[protein] + ADP + H(+). Its activity is regulated as follows. Activated by threonine and tyrosine phosphorylation. Activated in response to hydrogen peroxide, salicylic acid, jasmonic acid, ethylene, fungal elicitor and infection with rice blast fungus (M.grisea). May be involved in defense signaling pathway. Phosphorylates EREBP1 transcriptional activator in vitro. Enhances DNA-binding activity of EREBP1 to the GCC box element of pathogenesis-related (PR) gene promoters. The sequence is that of Mitogen-activated protein kinase 12 (MPK12) from Oryza sativa subsp. japonica (Rice).